The following is a 324-amino-acid chain: Acetyl-coenzyme A carboxylase carboxyl transferase subunit alpha (324 aa).

The 255-residue stretch at 44-298 (RFQNQLVKLQ…KKELTEQLDS (255 aa)) folds into the CoA carboxyltransferase C-terminal domain.

The protein belongs to the AccA family. Acetyl-CoA carboxylase is a heterohexamer composed of biotin carboxyl carrier protein (accB), biotin carboxylase (accC) and two subunits each of ACCase subunit alpha (accA) and ACCase subunit beta (accD).

It localises to the plastid. Its subcellular location is the chloroplast. The catalysed reaction is N(6)-carboxybiotinyl-L-lysyl-[protein] + acetyl-CoA = N(6)-biotinyl-L-lysyl-[protein] + malonyl-CoA. Its pathway is lipid metabolism; malonyl-CoA biosynthesis; malonyl-CoA from acetyl-CoA: step 1/1. Component of the acetyl coenzyme A carboxylase (ACC) complex. First, biotin carboxylase catalyzes the carboxylation of biotin on its carrier protein (BCCP) and then the CO(2) group is transferred by the carboxyltransferase to acetyl-CoA to form malonyl-CoA. The chain is Acetyl-coenzyme A carboxylase carboxyl transferase subunit alpha from Pyropia yezoensis (Susabi-nori).